Reading from the N-terminus, the 245-residue chain is MMRADLSKKPGQVSAMFDEVSSAYDRTNTLLSVGNDQLWRVATTRAVAPVAGERILDLAAGTGTSSAALAASGAHVVAADFSEGMLEVGRRRLAGDDRVEFVHADATDLPFDDDSFDAVTISFGLRNVVEPRKGLDELLRVLKPGGRIVICEFSTPPVPLVRRGYDLYMKAVAPSLVKLVSSNASAYEYLNESIQAWPDQETLSSWLRAAGFASVEHRNLTAGIVALHRGVKPAGRHAAPRPAAS.

Residues threonine 62, aspartate 80, aspartate 105–alanine 106, and serine 122 contribute to the S-adenosyl-L-methionine site.

This sequence belongs to the class I-like SAM-binding methyltransferase superfamily. MenG/UbiE family.

It catalyses the reaction a 2-demethylmenaquinol + S-adenosyl-L-methionine = a menaquinol + S-adenosyl-L-homocysteine + H(+). It functions in the pathway quinol/quinone metabolism; menaquinone biosynthesis; menaquinol from 1,4-dihydroxy-2-naphthoate: step 2/2. Methyltransferase required for the conversion of demethylmenaquinol (DMKH2) to menaquinol (MKH2). The chain is Demethylmenaquinone methyltransferase from Clavibacter sepedonicus (Clavibacter michiganensis subsp. sepedonicus).